A 285-amino-acid polypeptide reads, in one-letter code: Putative cuticle collagen 75 (285 aa).

Triple-helical region stretches follow at residues glycine 87–leucine 116 and glycine 133–aspartate 261. Residues proline 207–isoleucine 231 show a composition bias toward low complexity. A disordered region spans residues proline 207 to glycine 257.

This sequence belongs to the cuticular collagen family. As to quaternary structure, collagen polypeptide chains are complexed within the cuticle by disulfide bonds and other types of covalent cross-links.

Its function is as follows. Nematode cuticles are composed largely of collagen-like proteins. The cuticle functions both as an exoskeleton and as a barrier to protect the worm from its environment. This chain is Putative cuticle collagen 75 (col-75), found in Caenorhabditis elegans.